The primary structure comprises 225 residues: Acidic leucine-rich nuclear phosphoprotein 32-related protein 2 (225 aa).

LRR repeat units lie at residues 39–60, 61–82, and 87–107; these read KLEL…PVLP, ALNY…DVLI, and EIKK…RTLK. The LRRCT domain occupies 121 to 161; that stretch reads SSLGLLDDYRVKMFEMIPSLKILDGCDVDGEEVEEEFAAGE. Acidic residues predominate over residues 155-175; it reads EEFAAGEGAEDSDEGDSDEDG. The tract at residues 155-225 is disordered; that stretch reads EEFAAGEGAE…DEPEAKKSAE (71 aa).

This sequence belongs to the ANP32 family.

The protein is Acidic leucine-rich nuclear phosphoprotein 32-related protein 2 of Caenorhabditis elegans.